A 170-amino-acid polypeptide reads, in one-letter code: Kunitz-type U1-aranetoxin-Av1a (170 aa).

A signal peptide spans 1-19 (MAKLLCTLFLAGFVFLANA). Positions 20-113 (YSTDPPNPPD…WIPGWIPGLG (94 aa)) are excised as a propeptide. A BPTI/Kunitz inhibitor domain is found at 117-167 (CLLPKVTGPCKASLTRYYYDKDTKACVEFIYGGCRGNRNNFKQKDECEKAC). Cystine bridges form between Cys-117/Cys-167, Cys-126/Cys-150, and Cys-142/Cys-163.

The protein belongs to the venom Kunitz-type family. 02 (native) subfamily. O-glycosylated. Only expressed in epidermis.

Its subcellular location is the secreted. Functionally, serine protease inhibitor with activity against plasmin (IC(50)=10.07 nM), trypsin (IC(50)=43.39 nM), chymotrypsin (IC(50)=109.25 nM) and neutrophil elastase (IC(50)=446.93 nM). In Araneus ventricosus (Orbweaver spider), this protein is Kunitz-type U1-aranetoxin-Av1a.